The following is a 108-amino-acid chain: uncharacterized protein (108 aa).

A signal peptide spans 1-22 (MMIKQCVICLSLLVFGTTAAHA).

This is an uncharacterized protein from Bacillus subtilis (strain 168).